Consider the following 111-residue polypeptide: MLDKLWDDIVAGPQPERGLEKLRKLTTTLKDDGASNQLMRSTSIPTTPTTPVTPTTPSSARKVDNVWRSVFNPGSNSATKSIGAHVFDKPLPNTPTVYDWMYSGDTRSKHR.

The disordered stretch occupies residues 30–60; sequence KDDGASNQLMRSTSIPTTPTTPVTPTTPSSA. Residues 41–59 are compositionally biased toward low complexity; sequence STSIPTTPTTPVTPTTPSS.

The protein belongs to the DRM1/ARP family. As to expression, expressed in axilary buds and in non-growing stems and roots. Detected in sepals, stamens and carpels, but barely detected in petals or leaflets.

The protein is Dormancy-associated protein 1 of Pisum sativum (Garden pea).